The sequence spans 249 residues: UPF0309 protein GTNG_1302 (249 aa).

The SIS domain maps to 31–214; sequence VSKAVQNGGI…ALMAENGVEP (184 aa).

This sequence belongs to the UPF0309 family.

This Geobacillus thermodenitrificans (strain NG80-2) protein is UPF0309 protein GTNG_1302.